The chain runs to 857 residues: Gelation factor (857 aa).

Met1 is subject to Blocked amino end (Met). Residues 1 to 250 (MAAAPSGKTW…EKKRRETSDA (250 aa)) are actin-binding. Calponin-homology (CH) domains lie at 12–117 (DVQK…LRYQ) and 125–227 (NSPK…DYAL). The tract at residues 229–246 (KEKRDADALAALEKKRRE) is regulatory site. 6 Filamin repeats span residues 245–346 (RETS…NVKI), 347–446 (DGSD…EVKI), 447–545 (LNSD…SIHI), 546–645 (KPAA…TVTV), 646–747 (KPAP…DVKC), and 763–837 (FTVA…KQVL). Residues 832-857 (PFKQVLGNPGKKNPEVKSFTTTRTAN) form a disordered region.

As to quaternary structure, homodimer.

F-actin cross-linking protein. The protein is Gelation factor (abpC) of Dictyostelium discoideum (Social amoeba).